Consider the following 414-residue polypeptide: Clusterin-associated protein 1 (414 aa).

Residues 198–291 are a coiled coil; it reads KTKDLLNNVA…ERFEEAKNTL (94 aa). The interval 305 to 414 is disordered; sequence LLKSGSNDDS…EPLDESDNDF (110 aa). Acidic residues-rich tracts occupy residues 312 to 328 and 360 to 389; these read DDSD…DSEL and DSDD…EDES. Phosphoserine occurs at positions 314, 324, and 326. The residue at position 410 (serine 410) is a Phosphoserine.

This sequence belongs to the CLUAP1 family. Interacts with CLU/clusterin. Interacts with UBXN10; the interaction is direct.

It localises to the cell projection. The protein resides in the cilium. The protein localises to the nucleus. In terms of biological role, required for cilia biogenesis. Appears to function within the multiple intraflagellar transport complex B (IFT-B). Key regulator of hedgehog signaling. This chain is Clusterin-associated protein 1 (CLUAP1), found in Macaca fascicularis (Crab-eating macaque).